The following is a 351-amino-acid chain: N-acetyl-gamma-glutamyl-phosphate reductase (351 aa).

Residue Cys154 is part of the active site.

Belongs to the NAGSA dehydrogenase family. Type 1 subfamily.

It is found in the cytoplasm. It catalyses the reaction N-acetyl-L-glutamate 5-semialdehyde + phosphate + NADP(+) = N-acetyl-L-glutamyl 5-phosphate + NADPH + H(+). The protein operates within amino-acid biosynthesis; L-arginine biosynthesis; N(2)-acetyl-L-ornithine from L-glutamate: step 3/4. Catalyzes the NADPH-dependent reduction of N-acetyl-5-glutamyl phosphate to yield N-acetyl-L-glutamate 5-semialdehyde. The sequence is that of N-acetyl-gamma-glutamyl-phosphate reductase from Prochlorococcus marinus (strain MIT 9312).